Consider the following 85-residue polypeptide: ATP synthase subunit c (85 aa).

2 helical membrane-spanning segments follow: residues 10 to 30 (IAVGIIVGLASLGTAIGFAIL) and 53 to 73 (FIIAGLLDAVPMIGIVIALLF).

Belongs to the ATPase C chain family. In terms of assembly, F-type ATPases have 2 components, F(1) - the catalytic core - and F(0) - the membrane proton channel. F(1) has five subunits: alpha(3), beta(3), gamma(1), delta(1), epsilon(1). F(0) has three main subunits: a(1), b(2) and c(10-14). The alpha and beta chains form an alternating ring which encloses part of the gamma chain. F(1) is attached to F(0) by a central stalk formed by the gamma and epsilon chains, while a peripheral stalk is formed by the delta and b chains.

Its subcellular location is the cell inner membrane. Its function is as follows. F(1)F(0) ATP synthase produces ATP from ADP in the presence of a proton or sodium gradient. F-type ATPases consist of two structural domains, F(1) containing the extramembraneous catalytic core and F(0) containing the membrane proton channel, linked together by a central stalk and a peripheral stalk. During catalysis, ATP synthesis in the catalytic domain of F(1) is coupled via a rotary mechanism of the central stalk subunits to proton translocation. Functionally, key component of the F(0) channel; it plays a direct role in translocation across the membrane. A homomeric c-ring of between 10-14 subunits forms the central stalk rotor element with the F(1) delta and epsilon subunits. The chain is ATP synthase subunit c from Aliivibrio salmonicida (strain LFI1238) (Vibrio salmonicida (strain LFI1238)).